We begin with the raw amino-acid sequence, 75 residues long: MEKGLIAIGIGISMISGLGVGLGQGLAAGKAAEAVGRNPEAASKIRTMMLVGQAVAESAAIYALVISILLMFAFN.

2 helical membrane passes run 4–24 (GLIA…GLGQ) and 54–74 (AVAE…MFAF).

Belongs to the ATPase C chain family. F-type ATPases have 2 components, F(1) - the catalytic core - and F(0) - the membrane proton channel. F(1) has five subunits: alpha(3), beta(3), gamma(1), delta(1), epsilon(1). F(0) has three main subunits: a(1), b(2) and c(10-14). The alpha and beta chains form an alternating ring which encloses part of the gamma chain. F(1) is attached to F(0) by a central stalk formed by the gamma and epsilon chains, while a peripheral stalk is formed by the delta and b chains.

Its subcellular location is the cell membrane. Functionally, f(1)F(0) ATP synthase produces ATP from ADP in the presence of a proton or sodium gradient. F-type ATPases consist of two structural domains, F(1) containing the extramembraneous catalytic core and F(0) containing the membrane proton channel, linked together by a central stalk and a peripheral stalk. During catalysis, ATP synthesis in the catalytic domain of F(1) is coupled via a rotary mechanism of the central stalk subunits to proton translocation. In terms of biological role, key component of the F(0) channel; it plays a direct role in translocation across the membrane. A homomeric c-ring of between 10-14 subunits forms the central stalk rotor element with the F(1) delta and epsilon subunits. This Mycoplasmopsis agalactiae (strain NCTC 10123 / CIP 59.7 / PG2) (Mycoplasma agalactiae) protein is ATP synthase subunit c.